The following is a 134-amino-acid chain: ATP synthase epsilon chain, chloroplastic (134 aa).

The protein belongs to the ATPase epsilon chain family. F-type ATPases have 2 components, CF(1) - the catalytic core - and CF(0) - the membrane proton channel. CF(1) has five subunits: alpha(3), beta(3), gamma(1), delta(1), epsilon(1). CF(0) has three main subunits: a, b and c.

It localises to the plastid. The protein localises to the chloroplast thylakoid membrane. Its function is as follows. Produces ATP from ADP in the presence of a proton gradient across the membrane. The protein is ATP synthase epsilon chain, chloroplastic of Nymphaea alba (White water-lily).